The sequence spans 582 residues: Protein NRT1/ PTR FAMILY 5.2 (582 aa).

Transmembrane regions (helical) follow at residues 77-97, 100-120, 141-161, 189-209, 217-237, 334-354, 370-390, 408-428, 452-472, 493-515, and 538-558; these read WVGTSWLTPILGAYVGDALLG, ITFVISCAIYFSGMMVLTLSV, ASVLQLAVFFGALYTLAIGTG, FFNWWMFSIFFGTLFANTVLV, WTLGYGLPTLGLAISITIFLL, PVLFITFVPSMMLAQINTLFV, IPPASLSGFVTLSMLISIVLY, ITLLQRMGIGLIFHILIMIVA, LPLTIFALLPQFVLMGMADSF, GTSYSTTSLAIGNFMSSFLLSTV, and YYYLFFAVLNLVNFVLFLVVV.

This sequence belongs to the major facilitator superfamily. Proton-dependent oligopeptide transporter (POT/PTR) (TC 2.A.17) family. Expressed in roots. Detected in shoots, leaves and flowers.

The protein resides in the membrane. In terms of biological role, peptide transporter involved in stress tolerance in seeds during germination and in defense against virulent bacterial pathogens. The protein is Protein NRT1/ PTR FAMILY 5.2 (NPF5.2) of Arabidopsis thaliana (Mouse-ear cress).